We begin with the raw amino-acid sequence, 90 residues long: Acylphosphatase (90 aa).

In terms of domain architecture, Acylphosphatase-like spans 3–90; that stretch reads HYHAIITGRV…AHYQDFRIKG (88 aa). Residues arginine 18 and asparagine 36 contribute to the active site.

Belongs to the acylphosphatase family.

It catalyses the reaction an acyl phosphate + H2O = a carboxylate + phosphate + H(+). This is Acylphosphatase (acyP) from Bacillus pumilus (strain SAFR-032).